The following is a 697-amino-acid chain: Zinc finger protein 12 (697 aa).

Residue K3 forms a Glycyl lysine isopeptide (Lys-Gly) (interchain with G-Cter in SUMO2) linkage. A KRAB domain is found at 8–79; that stretch reads VSFKDVAVDF…EGEFLLQSYP (72 aa). Glycyl lysine isopeptide (Lys-Gly) (interchain with G-Cter in SUMO2) cross-links involve residues K98, K179, K182, K209, K215, K224, K239, and K267. C2H2-type zinc fingers lie at residues 269–291 and 297–319; these read YECS…QRTH and YECN…QRTH. Residues K309, K323, K337, and K365 each participate in a glycyl lysine isopeptide (Lys-Gly) (interchain with G-Cter in SUMO2) cross-link. C2H2-type zinc fingers lie at residues 325 to 347, 353 to 375, 381 to 403, 409 to 431, 437 to 459, 465 to 487, 493 to 515, and 521 to 543; these read YECN…QRTH, YECS…QRTH, YVCH…QKIH, YKCS…LRTH, YECN…YRTH, YECN…QRVH, YECN…HRTH, and YECS…RRIH. Glycyl lysine isopeptide (Lys-Gly) (interchain with G-Cter in SUMO2) cross-links involve residues K544 and K547. 5 C2H2-type zinc fingers span residues 549 to 571, 577 to 599, 605 to 627, 633 to 655, and 661 to 683; these read YECY…HRIH, YECS…QRTH, FECN…YRTH, and YECT…QRIH.

The protein belongs to the krueppel C2H2-type zinc-finger protein family. Widely expressed in various adult tissues and embryonic developmental stages (isoform 3).

The protein localises to the nucleus. Transcriptional repressor which suppresses activation protein 1 (AP-1)- and serum response element (SRE)-mediated transcriptional activity. The protein is Zinc finger protein 12 (ZNF12) of Homo sapiens (Human).